The primary structure comprises 417 residues: MAP kinase-interacting serine/threonine-protein kinase 1 (417 aa).

Residues 1-20 (MVSSQPVPIDDGGKRRKKKR) form a disordered region. One can recognise a Protein kinase domain in the interval 37 to 321 (RLTDELLGEG…AAQVLQHPWL (285 aa)). ATP is bound by residues 43–51 (LGEGAYAKV) and Lys-66. Residue Asp-158 is the Proton acceptor of the active site. Positions 397 to 417 (AHARKGGSHLTHTTVTSQGAT) are disordered. A compositionally biased stretch (polar residues) spans 406 to 417 (LTHTTVTSQGAT).

Belongs to the protein kinase superfamily. CAMK Ser/Thr protein kinase family. Requires Mg(2+) as cofactor.

It carries out the reaction L-seryl-[protein] + ATP = O-phospho-L-seryl-[protein] + ADP + H(+). The catalysed reaction is L-threonyl-[protein] + ATP = O-phospho-L-threonyl-[protein] + ADP + H(+). Functionally, may play a role in the response to environmental stress and cytokines. Appears to regulate translation by phosphorylating EIF4E, thus increasing the affinity of this protein for the 7-methylguanosine-containing mRNA cap. This chain is MAP kinase-interacting serine/threonine-protein kinase 1 (mknk1), found in Xenopus tropicalis (Western clawed frog).